The following is a 418-amino-acid chain: Thyroxine-binding globulin (418 aa).

Residues 1–20 (MSMFFYLFLLVLGLQATIHC) form the signal peptide. 6 N-linked (GlcNAc...) asparagine glycosylation sites follow: Asn24, Asn39, Asn102, Asn168, Asn227, and Asn256. The thyroxine site is built by Asn296 and Lys401.

This sequence belongs to the serpin family. Expressed by the liver and secreted in plasma.

The protein localises to the secreted. Functionally, major thyroid hormone transport protein in serum. The chain is Thyroxine-binding globulin (Serpina7) from Rattus norvegicus (Rat).